Here is a 125-residue protein sequence, read N- to C-terminus: Large ribosomal subunit protein bL12 (125 aa).

This sequence belongs to the bacterial ribosomal protein bL12 family. In terms of assembly, homodimer. Part of the ribosomal stalk of the 50S ribosomal subunit. Forms a multimeric L10(L12)X complex, where L10 forms an elongated spine to which 2 to 4 L12 dimers bind in a sequential fashion. Binds GTP-bound translation factors.

Forms part of the ribosomal stalk which helps the ribosome interact with GTP-bound translation factors. Is thus essential for accurate translation. The polypeptide is Large ribosomal subunit protein bL12 (Campylobacter jejuni subsp. jejuni serotype O:2 (strain ATCC 700819 / NCTC 11168)).